We begin with the raw amino-acid sequence, 597 residues long: Miltiradiene synthase KSL2, chloroplastic (597 aa).

A chloroplast-targeting transit peptide spans Met1–Met51. Residues Asp329, Asp333, Asn473, and Glu481 each contribute to the Mg(2+) site. The short motif at Asp329–Asp333 is the DDXXD motif element.

It belongs to the terpene synthase family. The cofactor is Mg(2+).

The protein resides in the plastid. It is found in the chloroplast. It carries out the reaction (+)-copalyl diphosphate = miltiradiene + diphosphate. Its pathway is secondary metabolite biosynthesis; terpenoid biosynthesis. Involved in the biosynthesis of ent-kaurene diterpenoids natural products such as oridonin, miltiradiene, eriocalyxin B and nezukol, known to exhibit antitumor, anti-inflammatory and antibacterial activities. Catalyzes the conversion of (+)-copalyl diphosphate ((+)-CPP) to miltiradiene. The polypeptide is Miltiradiene synthase KSL2, chloroplastic (Isodon japonicus (Scutellaria japonica)).